The chain runs to 154 residues: Probable transport accessory protein MmpS4 (154 aa).

2 helical membrane-spanning segments follow: residues 19–39 (IWIPLVILVVLVVGGFVVYRV) and 97–117 (QLPWSLLMTTTLAAVMGNLVA).

This sequence belongs to the MmpS family.

The protein localises to the cell membrane. The protein is Probable transport accessory protein MmpS4 of Mycobacterium leprae (strain TN).